The chain runs to 833 residues: DNA gyrase subunit A (833 aa).

One can recognise a Topo IIA-type catalytic domain in the interval Leu34–Ile500. Tyr122 (O-(5'-phospho-DNA)-tyrosine intermediate) is an active-site residue. The GyrA-box signature appears at Gln527 to Gly533.

It belongs to the type II topoisomerase GyrA/ParC subunit family. In terms of assembly, heterotetramer, composed of two GyrA and two GyrB chains. In the heterotetramer, GyrA contains the active site tyrosine that forms a transient covalent intermediate with DNA, while GyrB binds cofactors and catalyzes ATP hydrolysis.

Its subcellular location is the cytoplasm. The catalysed reaction is ATP-dependent breakage, passage and rejoining of double-stranded DNA.. Functionally, a type II topoisomerase that negatively supercoils closed circular double-stranded (ds) DNA in an ATP-dependent manner to modulate DNA topology and maintain chromosomes in an underwound state. Negative supercoiling favors strand separation, and DNA replication, transcription, recombination and repair, all of which involve strand separation. Also able to catalyze the interconversion of other topological isomers of dsDNA rings, including catenanes and knotted rings. Type II topoisomerases break and join 2 DNA strands simultaneously in an ATP-dependent manner. The sequence is that of DNA gyrase subunit A from Chlamydia muridarum (strain MoPn / Nigg).